Reading from the N-terminus, the 272-residue chain is Homeobox protein SIX3 (272 aa).

Residues 169-228 (GEQKTHCFKERTRGLLREWYLQDPYPNPGKKRELAHATGLTPTQVGNWFKNRRQRDRAAA) constitute a DNA-binding region (homeobox). The segment at 244 to 272 (CTLSGGDSSERADGDTFLSVTDSDSDLDV) is disordered.

It belongs to the SIX/Sine oculis homeobox family. As to quaternary structure, interacts with GMNN.

It is found in the nucleus. In terms of biological role, transcriptional regulator which can act as both a transcriptional repressor and activator by binding a ATTA homeodomain core recognition sequence on these target genes. During forebrain development represses WNT1 expression allowing zona limitans intrathalamica formation and thereby ensuring proper anterio-posterior patterning of the diencephalon and formation of the rostral diencephalon. Acts as a direct upstream activator of SHH expression in the rostral diencephalon ventral midline and that in turn SHH maintains its expression. In addition, Six3 activity is required for the formation of the telencephalon. During postnatal stages of brain development is necessary for ependymal cell maturation by promoting the maturation of radial glia into ependymal cells through regulation of neuroblast proliferation and migration. Acts on the proliferation and differentiation of neural progenitor cells through activating transcription of CCND1 and CCND2. During early lens formation plays a role in lens induction and specification by activating directly PAX6 in the presumptive lens ectoderm. In turn PAX6 activates SIX3 resulting in activation of PDGFRA and CCND1 promoting cell proliferation. Also is required for the neuroretina development by directly suppressing WNT8B expression in the anterior neural plate territory. Its action during retina development and lens morphogenesis is AES and TLE4-dependent manner. Furthermore, during eye development regulates several genes expression. Before and during early lens development represses the CRYGF promoter by binding a SIX repressor element. Directly activates RHO transcription, or cooperates with CRX or NRL. Six3 also functions in the formation of the proximodistal axis of the optic cup, and promotes the formation of optic vesicles-like structures. During pituitary development, acts in parallel or alternatively with HESX1 to control cell proliferation through Wnt/beta-catenin pathway. Plays a role in eye development by suppressing WNT1 expression and in dorsal-ventral patterning by repressing BMP signaling pathway. In Oryzias latipes (Japanese rice fish), this protein is Homeobox protein SIX3 (six3).